The following is a 922-amino-acid chain: MATASPRSDTSNNHSGRLQLQVTVSSAKLKRKKNWFGTAIYTEVVVDGEITKTAKSSSSSNPKWDEQLTVNVTPQTTLEFQVWSHRTLKADALLGKATIDLKQALLIHNRKLERVKEQLKLSLENKNGIAQTGELTVVLDGLVIEQENITNCSSSPTIEIQENGDALHENGEPSARTTARLAVEGTNGIDNHVPTSTLVQNSCCSYVVNGDNTPSSPSQVAARPKNTPAPKPLASEPADDTVNGESSSFAPTDNASVTGTPVVSEENALSPNCTSTTVEDPPVQEILTSSENNECIPSTSAELESEARSILEPDTSNSRSSSAFEAAKSRQPDGCMDPVRQQSGNANTETLPSGWEQRKDPHGRTYYVDHNTRTTTWERPQPLPPGWERRVDDRRRVYYVDHNTRTTTWQRPTMESVRNFEQWQSQRNQLQGAMQQFNQRYLYSASMLAAENDPYGPLPPGWEKRVDSTDRVYFVNHNTKTTQWEDPRTQGLQNEEPLPEGWEIRYTREGVRYFVDHNTRTTTFKDPRNGKSSVTKGGPQIAYERGFRWKLAHFRYLCQSNALPSHVKINVSRQTLFEDSFQQIMALKPYDLRRRLYVIFRGEEGLDYGGLAREWFFLLSHEVLNPMYCLFEYAGKNNYCLQINPASTINPDHLSYFCFIGRFIAMALFHGKFIDTGFSLPFYKRMLSKKLTIKDLESIDTEFYNSLIWIRDNNIEECGLEMYFSVDMEILGKVTSHDLKLGGSNILVTEENKDEYIGLMTEWRFSRGVQEQTKAFLDGFNEVVPLQWLQYFDEKELEVMLCGMQEVDLADWQRNTVYRHYTRNSKQIIWFWQFVKETDNEVRMRLLQFVTGTCRLPLGGFAELMGSNGPQKFCIEKVGKDTWLPRSHTCFNRLDLPPYKSYEQLKEKLLFAIEETEGFGQE.

A C2 domain is found at 1–116 (MATASPRSDT…IHNRKLERVK (116 aa)). Composition is skewed to polar residues over residues 210–219 (GDNTPSSPSQ), 243–278 (NGES…STTV), 286–302 (ILTS…TSAE), 314–323 (DTSNSRSSSA), and 340–351 (RQQSGNANTETL). The disordered stretch occupies residues 210–388 (GDNTPSSPSQ…RPQPLPPGWE (179 aa)). WW domains follow at residues 349–382 (ETLP…RPQP), 381–414 (QPLP…RPTM), 456–489 (GPLP…DPRT), and 496–529 (EPLP…DPRN). The segment at 349 to 531 (ETLPSGWEQR…TTFKDPRNGK (183 aa)) is required for interaction with and ubiquitination of AMOTL2. Required for interaction with YAP1. The 335-residue stretch at 588-922 (KPYDLRRRLY…IEETEGFGQE (335 aa)) folds into the HECT domain. Cys890 (glycyl thioester intermediate) is an active-site residue.

In terms of assembly, interacts with the Crumbs complex components PALS1 and PATJ; interaction with the Crumbs complex is enhanced by WWP1's interaction with AMOTL2 and facilitates WWP1 localization to the plasma membrane. Interaction with the Crumbs complex promotes WWP1 monoubiquitination of AMOTL2, which activates the Hippo signaling pathway. Binds KLF2 and HIVEP3. Binds SCNN1A, SCNN1B, SCNN1G, WBP1, WBP2, DRPLA and adenovirus type 2 PIII. Interacts with RNF11. Interacts with SPART. Interacts with ERBB4 isoforms JM-B CYT-1 and JM-A CYT-1. Interacts with SMAD1, SMAD2, SMAD3, SMAD5, SMAD6, SMAD7, TGFBR1 and TGFBR2. Associates with the TGFBR1:TGFBR2 receptor complex in presence of SMAD7. Interacts with SKIL isoform 1. Interacts with TP63 isoform 1 and isoform 2. Interacts with STAMBP and RNF11. Interacts with NDFIP1 and NDFIP2; this interaction activates the E3 ubiquitin-protein ligase. Interacts with TGIF. Interacts (via WW domains) with ARRDC1, ARRDC2 and ARRDC3. (Microbial infection) Interacts with HTLV-1 protein Gag. As to quaternary structure, (Microbial infection) Interacts with ebola virus protein VP40. Auto-ubiquitinated and ubiquitinated by RNF11. In terms of tissue distribution, detected in heart, placenta, pancreas, kidney, liver, skeletal muscle, bone marrow, fetal brain, and at much lower levels in adult brain and lung. Isoform 1 and isoform 5 predominate in all tissues tested, except in testis and bone marrow, where isoform 5 is expressed at much higher levels than isoform 1.

It is found in the cytoplasm. It localises to the cell membrane. The protein resides in the nucleus. The protein localises to the cell junction. It catalyses the reaction S-ubiquitinyl-[E2 ubiquitin-conjugating enzyme]-L-cysteine + [acceptor protein]-L-lysine = [E2 ubiquitin-conjugating enzyme]-L-cysteine + N(6)-ubiquitinyl-[acceptor protein]-L-lysine.. Its pathway is protein modification; protein ubiquitination. With respect to regulation, activated by NDFIP1- and NDFIP2-binding. Functionally, E3 ubiquitin-protein ligase which accepts ubiquitin from an E2 ubiquitin-conjugating enzyme in the form of a thioester and then directly transfers the ubiquitin to targeted substrates. Ubiquitinates ERBB4 isoforms JM-A CYT-1 and JM-B CYT-1, KLF2, KLF5 and TP63 and promotes their proteasomal degradation. Ubiquitinates RNF11 without targeting it for degradation. Ubiquitinates and promotes degradation of TGFBR1; the ubiquitination is enhanced by SMAD7. Ubiquitinates SMAD6 and SMAD7. Ubiquitinates and promotes degradation of SMAD2 in response to TGF-beta signaling, which requires interaction with TGIF. Activates the Hippo signaling pathway in response to cell contact inhibition and recruitment to the Crumbs complex at the cell membrane. Monoubiquitinates AMOTL2 which facilitates its interaction with and activation of LATS2. LATS2 then phosphorylates YAP1, excluding it from the nucleus and therefore ultimately represses YAP1-driven transcription of target genes. This is NEDD4-like E3 ubiquitin-protein ligase WWP1 (WWP1) from Homo sapiens (Human).